We begin with the raw amino-acid sequence, 435 residues long: Trigger factor (435 aa).

One can recognise a PPIase FKBP-type domain in the interval 163–248; that stretch reads GELASVTFSA…VHAVKERKMP (86 aa).

It belongs to the FKBP-type PPIase family. Tig subfamily.

The protein localises to the cytoplasm. It carries out the reaction [protein]-peptidylproline (omega=180) = [protein]-peptidylproline (omega=0). Functionally, involved in protein export. Acts as a chaperone by maintaining the newly synthesized protein in an open conformation. Functions as a peptidyl-prolyl cis-trans isomerase. The chain is Trigger factor from Maridesulfovibrio salexigens (strain ATCC 14822 / DSM 2638 / NCIMB 8403 / VKM B-1763) (Desulfovibrio salexigens).